The primary structure comprises 249 residues: MATKRIGDEPAYVLHRYDWSESSLILEIFTRQYGRVALVARGAKKPSSSFRPILLPLQPLHIAFGGDAEIRTLKSAEWQGGHVMPTGDALLSGYYLNELLMRLLARDDPHPVLFDAYSATVQLLASQSVDTLQLALRAFELRLLRDIGLLPLLDAETATLAPLEPQARYVLVAEAGLRQAHDDDRNSLPGVQWQALQQALGDNALFSDTVRACIPGLNELKTQLRALLHYHCGVKVLKTRQMMMDLQAL.

This sequence belongs to the RecO family.

Its function is as follows. Involved in DNA repair and RecF pathway recombination. This chain is DNA repair protein RecO, found in Polaromonas sp. (strain JS666 / ATCC BAA-500).